Reading from the N-terminus, the 586-residue chain is Capsid scaffolding protein (586 aa).

Active-site charge relay system residues include His-53, Ser-123, and His-142. The span at 251–263 (SEETPENAIKDRS) shows a compositional bias: basic and acidic residues. Disordered regions lie at residues 251–288 (SEET…HVPA), 330–364 (ARRD…DIWP), 458–486 (NKRD…YFPG), and 530–586 (SASN…MMAD). Polar residues predominate over residues 264–284 (VSTQTAPSFDISESQQPSGQT). An interaction with pAP region spans residues 312–331 (EDMVYVPFEKYASLLAASAR). Interaction with major capsid protein stretches follow at residues 566–586 (DAQT…MMAD) and 567–586 (AQTK…MMAD).

It belongs to the herpesviridae capsid scaffolding protein family. As to quaternary structure, homomultimer. Interacts with major capsid protein. Exists in a monomer-dimer equilibrium with the dimer being the active species. Post-translationally, capsid scaffolding protein is cleaved by assemblin after formation of the spherical procapsid. As a result, the capsid obtains its mature, icosahedral shape. Cleavages occur at two or more sites: release (R-site) and maturation (M-site).

The protein localises to the host cytoplasm. It is found in the host nucleus. It carries out the reaction Cleaves -Ala-|-Ser- and -Ala-|-Ala- bonds in the scaffold protein.. Acts as a scaffold protein by binding major capsid protein in the cytoplasm, inducing the nuclear localization of both proteins. Multimerizes in the nucleus such as major capsid protein forms the icosahedral T=16 capsid. Autocatalytic cleavage releases the assembly protein, and subsequently abolishes interaction with major capsid protein. Cleavages products are evicted from the capsid before or during DNA packaging. Functionally, protease that plays an essential role in virion assembly within the nucleus. Catalyzes the cleavage of the assembly protein after formation of the spherical procapsid. By that cleavage, the capsid matures and gains its icosahedral shape. The cleavage sites seem to include -Ala-Ser-, -Ala-Ala-, as well as Ala-Thr bonds. Assemblin and cleavages products are evicted from the capsid before or during DNA packaging. Its function is as follows. Plays a major role in capsid assembly. Acts as a scaffold protein by binding major capsid protein. Multimerizes in the nucleus such as major capsid protein forms the icosahedral T=16 capsid. Cleaved by assemblin after capsid completion. The cleavages products are evicted from the capsid before or during DNA packaging. The sequence is that of Capsid scaffolding protein from Gallus gallus (Chicken).